Consider the following 98-residue polypeptide: Large ribosomal subunit protein uL23 (98 aa).

It belongs to the universal ribosomal protein uL23 family. As to quaternary structure, part of the 50S ribosomal subunit. Contacts protein L29, and trigger factor when it is bound to the ribosome.

One of the early assembly proteins it binds 23S rRNA. One of the proteins that surrounds the polypeptide exit tunnel on the outside of the ribosome. Forms the main docking site for trigger factor binding to the ribosome. The chain is Large ribosomal subunit protein uL23 from Bordetella avium (strain 197N).